We begin with the raw amino-acid sequence, 254 residues long: (2Z,6E)-farnesyl diphosphate synthase (254 aa).

D34 is an active-site residue. D34 contributes to the Mg(2+) binding site. Substrate contacts are provided by residues 35 to 38 (GNRR), W39, H52, and 80 to 82 (STD). N83 serves as the catalytic Proton acceptor. Residues R86, R203, and 209–211 (RLS) contribute to the substrate site. E222 is a binding site for Mg(2+).

Belongs to the UPP synthase family. Z-FPP synthase subfamily. In terms of assembly, homodimer. Requires Mg(2+) as cofactor.

The catalysed reaction is isopentenyl diphosphate + (2E)-geranyl diphosphate = (2Z,6E)-farnesyl diphosphate + diphosphate. In terms of biological role, catalyzes the condensation of only one isopentenyl pyrophosphate (IPP) unit in the cis configuration to E-geranyl diphosphate (E-GPP) generating the 15 carbon product (2Z,6E)-farnesyl diphosphate (Z-FPP or EZ-FPP). Only geranyl diphosphate (GPP) can be used as isoprenyl acceptor. This Thermobifida fusca (strain YX) protein is (2Z,6E)-farnesyl diphosphate synthase.